We begin with the raw amino-acid sequence, 224 residues long: Zinc finger C4H2 domain-containing protein (224 aa).

The stretch at 12-97 (ENIKEIRNKT…NKLLESTRRL (86 aa)) forms a coiled coil. Disordered regions lie at residues 166–185 (QAAR…QPPP) and 204–224 (PLCK…KPDE). A C4H2-type zinc finger spans residues 189-206 (CLSCHQQIHRNAPICPLC). Basic residues predominate over residues 208 to 224 (AKSRSRNPKKPKRKPDE).

It localises to the nucleus. The protein resides in the cytoplasm. Its subcellular location is the postsynaptic cell membrane. Plays a role in GABAergic and V2 interneurons differentiation. Involved in motoneuron development and in neuromuscular junction formation. This chain is Zinc finger C4H2 domain-containing protein (zc4h2), found in Danio rerio (Zebrafish).